Consider the following 226-residue polypeptide: MKAIKIAIDGPASSGKSTVAKIIAKNLGYTYLDTGAMYRSATYIALTHGYTDKEVALILEELEKNPISFKKAKDGSQLVFLGDEDVTLAIRQNDVTNNVSWVSALPEIREELVHQQRRIAQAGGIIMDGRDIGTVVLPDAELKIFLVASVEERAERRYKENLEKGIESDFETLKEEIAARDYKDSHRKVSPLKAAEDALIFDTTGVSIDGVVQFIQEKAEKIVDMS.

Residue 10–18 (GPASSGKST) participates in ATP binding.

It belongs to the cytidylate kinase family. Type 1 subfamily.

The protein localises to the cytoplasm. The enzyme catalyses CMP + ATP = CDP + ADP. The catalysed reaction is dCMP + ATP = dCDP + ADP. The protein is Cytidylate kinase of Streptococcus pyogenes serotype M5 (strain Manfredo).